A 463-amino-acid chain; its full sequence is Zinc finger protein PLAGL1 (463 aa).

7 consecutive C2H2-type zinc fingers follow at residues 4–26, 32–56, 62–84, 91–113, 120–142, 156–178, and 184–207; these read YPCQ…NYSH, YKCL…MATH, HQCA…LQTH, FGCE…LALH, LTCG…LKAH, HQCD…LVVH, and FLCQ…KKTH. Positions 285 to 310 are disordered; sequence LHPVAPPTSPPQPLQNHKYNTSSTSY. The span at 287–297 shows a compositional bias: pro residues; the sequence is PVAPPTSPPQP. Over residues 298–310 the composition is skewed to polar residues; that stretch reads LQNHKYNTSSTSY.

This sequence belongs to the krueppel C2H2-type zinc-finger protein family. Interacts with THRSP.

Its subcellular location is the nucleus. In terms of biological role, acts as a transcriptional activator. Involved in the transcriptional regulation of type 1 receptor for pituitary adenylate cyclase-activating polypeptide. This is Zinc finger protein PLAGL1 (PLAGL1) from Sus scrofa (Pig).